Consider the following 388-residue polypeptide: Succinate--CoA ligase [ADP-forming] subunit beta (388 aa).

One can recognise an ATP-grasp domain in the interval 9 to 244 (KQLFARYGMP…LSQEDERESR (236 aa)). ATP is bound by residues Lys-46, 53–55 (GRG), Glu-99, Thr-102, and Glu-107. Mg(2+) contacts are provided by Asn-199 and Asp-213. Residues Asn-264 and 321 to 323 (GIV) contribute to the substrate site.

Belongs to the succinate/malate CoA ligase beta subunit family. In terms of assembly, heterotetramer of two alpha and two beta subunits. Mg(2+) is required as a cofactor.

The enzyme catalyses succinate + ATP + CoA = succinyl-CoA + ADP + phosphate. The catalysed reaction is GTP + succinate + CoA = succinyl-CoA + GDP + phosphate. It participates in carbohydrate metabolism; tricarboxylic acid cycle; succinate from succinyl-CoA (ligase route): step 1/1. Functionally, succinyl-CoA synthetase functions in the citric acid cycle (TCA), coupling the hydrolysis of succinyl-CoA to the synthesis of either ATP or GTP and thus represents the only step of substrate-level phosphorylation in the TCA. The beta subunit provides nucleotide specificity of the enzyme and binds the substrate succinate, while the binding sites for coenzyme A and phosphate are found in the alpha subunit. The chain is Succinate--CoA ligase [ADP-forming] subunit beta from Serratia proteamaculans (strain 568).